The primary structure comprises 90 residues: DNA-directed RNA polymerase subunit omega (90 aa).

Belongs to the RNA polymerase subunit omega family. In terms of assembly, the RNAP catalytic core consists of 2 alpha, 1 beta, 1 beta' and 1 omega subunit. When a sigma factor is associated with the core the holoenzyme is formed, which can initiate transcription.

The catalysed reaction is RNA(n) + a ribonucleoside 5'-triphosphate = RNA(n+1) + diphosphate. Promotes RNA polymerase assembly. Latches the N- and C-terminal regions of the beta' subunit thereby facilitating its interaction with the beta and alpha subunits. The protein is DNA-directed RNA polymerase subunit omega of Alteromonas mediterranea (strain DSM 17117 / CIP 110805 / LMG 28347 / Deep ecotype).